Reading from the N-terminus, the 313-residue chain is Homoserine O-succinyltransferase (313 aa).

C142 serves as the catalytic Acyl-thioester intermediate. Residues K163 and S192 each coordinate substrate. H235 acts as the Proton acceptor in catalysis. Residue E237 is part of the active site. Position 249 (R249) interacts with substrate.

This sequence belongs to the MetA family.

It localises to the cytoplasm. The enzyme catalyses L-homoserine + succinyl-CoA = O-succinyl-L-homoserine + CoA. Its pathway is amino-acid biosynthesis; L-methionine biosynthesis via de novo pathway; O-succinyl-L-homoserine from L-homoserine: step 1/1. In terms of biological role, transfers a succinyl group from succinyl-CoA to L-homoserine, forming succinyl-L-homoserine. In Vibrio vulnificus (strain CMCP6), this protein is Homoserine O-succinyltransferase.